The sequence spans 127 residues: Large ribosomal subunit protein bL20 (127 aa).

This sequence belongs to the bacterial ribosomal protein bL20 family.

Binds directly to 23S ribosomal RNA and is necessary for the in vitro assembly process of the 50S ribosomal subunit. It is not involved in the protein synthesizing functions of that subunit. This chain is Large ribosomal subunit protein bL20, found in Bifidobacterium animalis subsp. lactis (strain AD011).